The following is a 521-amino-acid chain: Cytochrome P450 1A1 (521 aa).

Phe229 contacts substrate. Cys463 provides a ligand contact to heme.

Belongs to the cytochrome P450 family. Heme is required as a cofactor.

The protein resides in the endoplasmic reticulum membrane. It localises to the microsome membrane. It catalyses the reaction an organic molecule + reduced [NADPH--hemoprotein reductase] + O2 = an alcohol + oxidized [NADPH--hemoprotein reductase] + H2O + H(+). Functionally, cytochromes P450 are a group of heme-thiolate monooxygenases. They oxidize a variety of structurally unrelated compounds, including steroids, fatty acids, and xenobiotics. The chain is Cytochrome P450 1A1 (cyp1a1) from Sparus aurata (Gilthead sea bream).